The chain runs to 336 residues: UPF0324 membrane protein SP_0034 (336 aa).

8 helical membrane-spanning segments follow: residues 65 to 84, 91 to 113, 118 to 140, 153 to 175, 211 to 233, 249 to 271, 286 to 305, and 312 to 334; these read LLQY…QVFA, PVIL…FFAL, ATLV…APVI, VIFF…LHLS, SATI…LSYW, VFPL…TSLG, FLIV…VAMV, and ILLG…TLIG.

The protein belongs to the UPF0324 family.

It localises to the cell membrane. This Streptococcus pneumoniae serotype 4 (strain ATCC BAA-334 / TIGR4) protein is UPF0324 membrane protein SP_0034.